The chain runs to 142 residues: Spliceosomal protein DIB1 (142 aa).

This sequence belongs to the DIM1 family. In terms of assembly, component of the 25S [U4/U6.U5] tri-snRNP.

It localises to the nucleus. Functionally, essential role in pre-mRNA splicing. Also essential for entry into mitosis (G2/M progression) as well as for chromosome segregation during mitosis. The chain is Spliceosomal protein DIB1 (DIB1) from Candida glabrata (strain ATCC 2001 / BCRC 20586 / JCM 3761 / NBRC 0622 / NRRL Y-65 / CBS 138) (Yeast).